The chain runs to 164 residues: UPF0304 protein ESA_00925 (164 aa).

The protein belongs to the UPF0304 family.

This chain is UPF0304 protein ESA_00925, found in Cronobacter sakazakii (strain ATCC BAA-894) (Enterobacter sakazakii).